The sequence spans 177 residues: ATP synthase subunit delta (177 aa).

The protein belongs to the ATPase delta chain family. F-type ATPases have 2 components, F(1) - the catalytic core - and F(0) - the membrane proton channel. F(1) has five subunits: alpha(3), beta(3), gamma(1), delta(1), epsilon(1). F(0) has three main subunits: a(1), b(2) and c(10-14). The alpha and beta chains form an alternating ring which encloses part of the gamma chain. F(1) is attached to F(0) by a central stalk formed by the gamma and epsilon chains, while a peripheral stalk is formed by the delta and b chains.

The protein localises to the cell inner membrane. F(1)F(0) ATP synthase produces ATP from ADP in the presence of a proton or sodium gradient. F-type ATPases consist of two structural domains, F(1) containing the extramembraneous catalytic core and F(0) containing the membrane proton channel, linked together by a central stalk and a peripheral stalk. During catalysis, ATP synthesis in the catalytic domain of F(1) is coupled via a rotary mechanism of the central stalk subunits to proton translocation. Its function is as follows. This protein is part of the stalk that links CF(0) to CF(1). It either transmits conformational changes from CF(0) to CF(1) or is implicated in proton conduction. The protein is ATP synthase subunit delta of Shewanella sediminis (strain HAW-EB3).